The sequence spans 298 residues: Short-chain dehydrogenase/reductase prx6 (298 aa).

Residues I27, D70, N97, Y174, K178, V208, and T210 each coordinate NADP(+). The Proton acceptor role is filled by Y174. K178 serves as the catalytic Lowers pKa of active site Tyr.

This sequence belongs to the short-chain dehydrogenases/reductases (SDR) family.

The protein operates within sesquiterpene biosynthesis. In terms of biological role, short-chain dehydrogenase/reductase; part of the gene cluster that mediates the biosynthesis of PR-toxin, a bicyclic sesquiterpene belonging to the eremophilane class and acting as a mycotoxin. The first step of the pathway is catalyzed by the aristolochene synthase which performs the cyclization of trans,trans-farnesyl diphosphate (FPP) to the bicyclic sesquiterpene aristolochene. Following the formation of aristolochene, the non-oxygenated aristolochene is converted to the trioxygenated intermediate eremofortin B, via 7-epi-neopetasone. This conversion appears to involve three enzymes, a hydroxysterol oxidase-like enzyme, the quinone-oxidase prx3 that forms the quinone-type-structure in the bicyclic nucleus of aristolochene with the C8-oxo group and the C-3 hydroxyl group, and the P450 monooxygenase prx9 that introduces the epoxide at the double bond between carbons 1 and 2. No monoxy or dioxy-intermediates have been reported to be released to the broth, so these three early oxidative reactions may be coupled together. Eremofortin B is further oxidized by another P450 monooxygenase, that introduces a second epoxide between carbons 7 and 11 prior to acetylation to eremofortin A by the acetyltransferase prx11. The second epoxidation may be performed by a second P450 monooxygenase. After the acetylation step, eremofortin A is converted to eremofortin C and then to PR-toxin. First the conversion of eremofortin A to eremofortin C proceeds by oxidation of the side chain of the molecule at C-12 and is catalyzed by the short-chain oxidoreductase prx1. The cytochrome P450 monooxygenase prx8 also plays a role in this step. The primary alcohol formed at C-12 is finally oxidized by the short-chain alcohol dehydrogenase prx4 that forms PR-toxin. In Penicillium rubens (strain ATCC 28089 / DSM 1075 / NRRL 1951 / Wisconsin 54-1255) (Penicillium chrysogenum), this protein is Short-chain dehydrogenase/reductase prx6.